The primary structure comprises 523 residues: 2-isopropylmalate synthase (523 aa).

Positions 5–267 (VIIFDTTLRD…HTAINHQEIW (263 aa)) constitute a Pyruvate carboxyltransferase domain. Mn(2+)-binding residues include Asp-14, His-202, His-204, and Asn-238. Residues 392–523 (RLDYFSVQSG…QHNENNKETV (132 aa)) form a regulatory domain region.

The protein belongs to the alpha-IPM synthase/homocitrate synthase family. LeuA type 1 subfamily. Homodimer. Mn(2+) serves as cofactor.

It localises to the cytoplasm. The catalysed reaction is 3-methyl-2-oxobutanoate + acetyl-CoA + H2O = (2S)-2-isopropylmalate + CoA + H(+). Its pathway is amino-acid biosynthesis; L-leucine biosynthesis; L-leucine from 3-methyl-2-oxobutanoate: step 1/4. Its function is as follows. Catalyzes the condensation of the acetyl group of acetyl-CoA with 3-methyl-2-oxobutanoate (2-ketoisovalerate) to form 3-carboxy-3-hydroxy-4-methylpentanoate (2-isopropylmalate). The polypeptide is 2-isopropylmalate synthase (Escherichia coli O157:H7).